The sequence spans 306 residues: Pyridoxal 5'-phosphate synthase subunit PdxS (306 aa).

Aspartate 36 lines the D-ribose 5-phosphate pocket. Catalysis depends on lysine 93, which acts as the Schiff-base intermediate with D-ribose 5-phosphate. Glycine 165 serves as a coordination point for D-ribose 5-phosphate. A D-glyceraldehyde 3-phosphate-binding site is contributed by arginine 177. D-ribose 5-phosphate is bound by residues glycine 226 and 247-248 (GS).

The protein belongs to the PdxS/SNZ family. As to quaternary structure, in the presence of PdxT, forms a dodecamer of heterodimers.

The enzyme catalyses aldehydo-D-ribose 5-phosphate + D-glyceraldehyde 3-phosphate + L-glutamine = pyridoxal 5'-phosphate + L-glutamate + phosphate + 3 H2O + H(+). Its pathway is cofactor biosynthesis; pyridoxal 5'-phosphate biosynthesis. Catalyzes the formation of pyridoxal 5'-phosphate from ribose 5-phosphate (RBP), glyceraldehyde 3-phosphate (G3P) and ammonia. The ammonia is provided by the PdxT subunit. Can also use ribulose 5-phosphate and dihydroxyacetone phosphate as substrates, resulting from enzyme-catalyzed isomerization of RBP and G3P, respectively. The polypeptide is Pyridoxal 5'-phosphate synthase subunit PdxS (Salinispora tropica (strain ATCC BAA-916 / DSM 44818 / JCM 13857 / NBRC 105044 / CNB-440)).